Here is a 75-residue protein sequence, read N- to C-terminus: Sec-independent protein translocase protein TatA (75 aa).

A helical membrane pass occupies residues 1-21 (MGGFSIWHWLIVLVIVLLVFG). Positions 41-75 (KGMHDDDKPAGKLGDDSRTAEQAREAQAERDRDAR) are disordered.

The protein belongs to the TatA/E family. As to quaternary structure, the Tat system comprises two distinct complexes: a TatABC complex, containing multiple copies of TatA, TatB and TatC subunits, and a separate TatA complex, containing only TatA subunits. Substrates initially bind to the TatABC complex, which probably triggers association of the separate TatA complex to form the active translocon.

It is found in the cell inner membrane. In terms of biological role, part of the twin-arginine translocation (Tat) system that transports large folded proteins containing a characteristic twin-arginine motif in their signal peptide across membranes. TatA could form the protein-conducting channel of the Tat system. This is Sec-independent protein translocase protein TatA from Xanthomonas axonopodis pv. citri (strain 306).